The primary structure comprises 390 residues: Succinate--CoA ligase [ADP-forming] subunit beta (390 aa).

The 237-residue stretch at 9–245 (KHLLKKYNIP…TTQEDEHETM (237 aa)) folds into the ATP-grasp domain. ATP-binding positions include Lys-46, 53-55 (GRG), Glu-99, Ser-102, and Glu-107. 2 residues coordinate Mg(2+): Asn-200 and Asp-214. Residues Asn-265 and 322 to 324 (GIV) each bind substrate.

This sequence belongs to the succinate/malate CoA ligase beta subunit family. As to quaternary structure, heterotetramer of two alpha and two beta subunits. Mg(2+) serves as cofactor.

It carries out the reaction succinate + ATP + CoA = succinyl-CoA + ADP + phosphate. The enzyme catalyses GTP + succinate + CoA = succinyl-CoA + GDP + phosphate. It functions in the pathway carbohydrate metabolism; tricarboxylic acid cycle; succinate from succinyl-CoA (ligase route): step 1/1. Its function is as follows. Succinyl-CoA synthetase functions in the citric acid cycle (TCA), coupling the hydrolysis of succinyl-CoA to the synthesis of either ATP or GTP and thus represents the only step of substrate-level phosphorylation in the TCA. The beta subunit provides nucleotide specificity of the enzyme and binds the substrate succinate, while the binding sites for coenzyme A and phosphate are found in the alpha subunit. The sequence is that of Succinate--CoA ligase [ADP-forming] subunit beta from Coxiella burnetii (strain Dugway 5J108-111).